The following is a 447-amino-acid chain: Glucose-6-phosphate isomerase (447 aa).

Catalysis depends on Glu289, which acts as the Proton donor. Residues His310 and Lys424 contribute to the active site.

The protein belongs to the GPI family.

It localises to the cytoplasm. It catalyses the reaction alpha-D-glucose 6-phosphate = beta-D-fructose 6-phosphate. It participates in carbohydrate biosynthesis; gluconeogenesis. It functions in the pathway carbohydrate degradation; glycolysis; D-glyceraldehyde 3-phosphate and glycerone phosphate from D-glucose: step 2/4. Catalyzes the reversible isomerization of glucose-6-phosphate to fructose-6-phosphate. This Parabacteroides distasonis (strain ATCC 8503 / DSM 20701 / CIP 104284 / JCM 5825 / NCTC 11152) protein is Glucose-6-phosphate isomerase.